A 357-amino-acid polypeptide reads, in one-letter code: Red-sensitive opsin-1 (357 aa).

Residues 1 to 49 (MAEHWGDAIYAARRKGDETTREAMFTYTNSNNTKDPFEGPNYHIAPRWV) lie on the Extracellular side of the membrane. Asparagine 31 is a glycosylation site (N-linked (GlcNAc...) asparagine). Residues 50 to 74 (YNVATVWMFFVVVASTFTNGLVLVA) traverse the membrane as a helical segment. The Cytoplasmic segment spans residues 75–86 (TAKFKKLRHPLN). A helical membrane pass occupies residues 87–112 (WILVNLAIADLGETLFASTISVINQF). Residues 113–126 (FGYFILGHPMCIFE) lie on the Extracellular side of the membrane. Cysteine 123 and cysteine 200 form a disulfide bridge. The helical transmembrane segment at 127–146 (GYTVSVCGIAALWSLTVISW) threads the bilayer. Topologically, residues 147–165 (ERWVVVCKPFGNVKFDAKW) are cytoplasmic. The helical transmembrane segment at 166–189 (ASAGIIFSWVWAAAWCAPPIFGWS) threads the bilayer. Topologically, residues 190–215 (RYWPHGLKTSCGPDVFSGSEDPGVQS) are extracellular. Residues 216–243 (YMVVLMITCCIIPLAIIILCYIAVYLAI) form a helical membrane-spanning segment. Over 244–265 (HAVAQQQKDSESTQKAEKEVSR) the chain is Cytoplasmic. The chain crosses the membrane as a helical span at residues 266-289 (MVVVMIFAYCFCWGPYTFFACFAA). The Extracellular segment spans residues 290–297 (ANPGYAFH). The chain crosses the membrane as a helical span at residues 298–322 (PLAAAMPAYFAKSATIYNPVIYVFM). At lysine 309 the chain carries N6-(retinylidene)lysine. Residues 323 to 357 (NRQFRVCIMQLFGKKVDDGSEVSTSKTEVSSVAPA) are Cytoplasmic-facing.

This sequence belongs to the G-protein coupled receptor 1 family. Opsin subfamily. Post-translationally, phosphorylated on some or all of the serine and threonine residues present in the C-terminal region. As to expression, retinal double cone principal photoreceptor cell outer segments.

It is found in the membrane. Visual pigments are the light-absorbing molecules that mediate vision. They consist of an apoprotein, opsin, covalently linked to cis-retinal. The protein is Red-sensitive opsin-1 (opn1lw1) of Danio rerio (Zebrafish).